The chain runs to 738 residues: Cleavage and polyadenylation specificity factor subunit 2 (738 aa).

Belongs to the metallo-beta-lactamase superfamily. RNA-metabolizing metallo-beta-lactamase-like family. CPSF2/YSH1 subfamily. In terms of assembly, CPSF is a heterotetramer composed of four distinct subunits 160, 100, 70 and 30 kDa.

It localises to the nucleus. Its function is as follows. CPSF plays a key role in pre-mRNA 3'-end formation, recognizing the AAUAAA signal sequence and interacting with poly(A)polymerase and other factors to bring about cleavage and poly(A) addition. The sequence is that of Cleavage and polyadenylation specificity factor subunit 2 from Oryza sativa subsp. japonica (Rice).